The primary structure comprises 122 residues: Flowering-promoting factor 1-like protein 3 (122 aa).

The tract at residues 16–36 (ENPGSEESSSAGDGGGGGRRK) is disordered.

It belongs to the FPF1 family.

The protein is Flowering-promoting factor 1-like protein 3 of Oryza sativa subsp. japonica (Rice).